A 380-amino-acid polypeptide reads, in one-letter code: Chaperone protein DnaJ (380 aa).

The region spanning 5–69 (DLYKVLGVEK…QKRAQYDQFG (65 aa)) is the J domain. The CR-type zinc-finger motif lies at 140-222 (GKKTTITYNR…CGGSGHTEQS (83 aa)). Cys153, Cys156, Cys170, Cys173, Cys196, Cys199, Cys210, and Cys213 together coordinate Zn(2+). CXXCXGXG motif repeat units lie at residues 153 to 160 (CETCGGSG), 170 to 177 (CSKCHGAG), 196 to 203 (CDVCHGTG), and 210 to 217 (CATCGGSG).

The protein belongs to the DnaJ family. In terms of assembly, homodimer. Zn(2+) is required as a cofactor.

Its subcellular location is the cytoplasm. Its function is as follows. Participates actively in the response to hyperosmotic and heat shock by preventing the aggregation of stress-denatured proteins and by disaggregating proteins, also in an autonomous, DnaK-independent fashion. Unfolded proteins bind initially to DnaJ; upon interaction with the DnaJ-bound protein, DnaK hydrolyzes its bound ATP, resulting in the formation of a stable complex. GrpE releases ADP from DnaK; ATP binding to DnaK triggers the release of the substrate protein, thus completing the reaction cycle. Several rounds of ATP-dependent interactions between DnaJ, DnaK and GrpE are required for fully efficient folding. Also involved, together with DnaK and GrpE, in the DNA replication of plasmids through activation of initiation proteins. The protein is Chaperone protein DnaJ of Lactiplantibacillus plantarum (strain ATCC BAA-793 / NCIMB 8826 / WCFS1) (Lactobacillus plantarum).